A 536-amino-acid polypeptide reads, in one-letter code: Membrane protein insertase YidC (536 aa).

Transmembrane regions (helical) follow at residues 3-23 (LQRN…WKTW), 346-366 (ICGN…GITF), 417-437 (GGCF…YMLI), 454-474 (LSDQ…MFFI), and 494-514 (IPIL…LYYL).

It belongs to the OXA1/ALB3/YidC family. Type 1 subfamily. Interacts with the Sec translocase complex via SecD. Specifically interacts with transmembrane segments of nascent integral membrane proteins during membrane integration.

Its subcellular location is the cell membrane. Its function is as follows. Required for the insertion and/or proper folding and/or complex formation of integral membrane proteins into the membrane. Involved in integration of membrane proteins that insert both dependently and independently of the Sec translocase complex, as well as at least some lipoproteins. Aids folding of multispanning membrane proteins. The protein is Membrane protein insertase YidC of Buchnera aphidicola subsp. Baizongia pistaciae (strain Bp).